The following is a 372-amino-acid chain: 3-galactosyl-N-acetylglucosaminide 4-alpha-L-fucosyltransferase FUT3 (372 aa).

Topologically, residues 1 to 15 are cytoplasmic; that stretch reads MDPLGAAKPQWPWRR. A helical; Signal-anchor for type II membrane protein transmembrane segment spans residues 16 to 34; sequence CLAALLFQLLVAVCFFSYL. Residues 35 to 372 lie on the Lumenal side of the membrane; it reads RVSRDDATGS…TMRSIAAWFT (338 aa). The interval 40 to 69 is disordered; the sequence is DATGSPRPGLMAVEPVTGAPSGSSRQDTTP. 2 N-linked (GlcNAc...) asparagine glycosylation sites follow: Asn-165 and Asn-196.

It belongs to the glycosyltransferase 10 family. Post-translationally, glycosylated.

It localises to the golgi apparatus. The protein resides in the golgi stack membrane. The catalysed reaction is a beta-D-galactosyl-(1-&gt;3)-N-acetyl-beta-D-glucosaminyl derivative + GDP-beta-L-fucose = a beta-D-galactosyl-(1-&gt;3)-[alpha-L-fucosyl-(1-&gt;4)]-N-acetyl-beta-D-glucosaminyl derivative + GDP + H(+). It catalyses the reaction an N-acetyl-alpha-neuraminyl-(2-&gt;3)-beta-D-galactosyl-(1-&gt;4)-N-acetyl-beta-D-glucosaminyl derivative + GDP-beta-L-fucose = an alpha-Neu5Ac-(2-&gt;3)-beta-D-Gal-(1-&gt;4)-[alpha-L-Fuc-(1-&gt;3)]-beta-D-GlcNAc derivative + GDP + H(+). It carries out the reaction a beta-D-galactosyl-(1-&gt;4)-N-acetyl-beta-D-glucosaminyl derivative + GDP-beta-L-fucose = a beta-D-galactosyl-(1-&gt;4)-[alpha-L-fucosyl-(1-&gt;3)]-N-acetyl-beta-D-glucosaminyl derivative + GDP + H(+). The enzyme catalyses an alpha-Neu5Ac-(2-&gt;3)-beta-D-Gal-(1-&gt;4)-beta-D-GlcNAc-(1-&gt;3)-beta-D-Gal-(1-&gt;4)-[alpha-L-Fuc-(1-&gt;3)]-beta-D-GlcNAc derivative + GDP-beta-L-fucose = an alpha-Neu5Ac-(2-&gt;3)-beta-D-Gal-(1-&gt;4)-[alpha-L-Fuc-(1-&gt;3)]-beta-D-GlcNAc-(1-&gt;3)-beta-D-Gal-(1-&gt;4)-[alpha-L-Fuc-(1-&gt;3)]-beta-D-GlcNAc derivative + GDP + H(+). The catalysed reaction is Lc4Cer + GDP-beta-L-fucose = a lactoside III(4)-a-Fuc-Lc4Cer + GDP + H(+). It catalyses the reaction a beta-D-Gal-(1-&gt;3)-beta-D-GlcNAc-(1-&gt;3)-beta-D-Gal-(1-&gt;4)-beta-D-Glc-(1&lt;-&gt;1')-Cer(d18:1(4E)) + GDP-beta-L-fucose = a III(4)-a-Fuc-Lc4Cer(d18:1(4E)) + GDP + H(+). It carries out the reaction N-acetyl-alpha-neuraminosyl-(2-&gt;3)-beta-D-galactosyl-(1-&gt;3)-[N-acetyl-alpha-neuraminosyl-(2-&gt;6)]-N-acetyl-beta-D-glucosaminyl-(1-&gt;3)-beta-D-galactosyl-(1-&gt;4)-beta-D-glucosyl-(1&lt;-&gt;1')-N-acyl-sphing-4-enine + GDP-beta-L-fucose = N-acetyl-alpha-neuraminosyl-(2-&gt;3)-beta-D-galactosyl-(1-&gt;3)-alpha-L-fucosyl-(1-&gt;4)-[N-acetyl-alpha-neuraminosyl-(2-&gt;6)-N-acetyl-beta-D-glucosaminyl-(1-&gt;3)]-beta-D-galactosyl-(1-&gt;4)-beta-D-glucosyl-(1&lt;-&gt;1')-N-acyl-sphing-4-enine + GDP + H(+). The enzyme catalyses N-acetyl-alpha-neuraminosyl-(2-&gt;3)-beta-D-galactosyl-(1-&gt;3)-N-acetyl-beta-D-glucosaminyl-(1-&gt;3)-beta-D-galactosyl-(1-&gt;4)-beta-D-glucosyl-(1&lt;-&gt;1')-N-acyl-sphing-4-enine + GDP-beta-L-fucose = N-acetyl-alpha-neuraminosyl-(2-&gt;3)-beta-D-galactosyl-(1-&gt;3)-alpha-L-fucosyl-(1-&gt;4)-[N-acetyl-beta-D-glucosaminyl-(1-&gt;3)]-beta-D-galactosyl-(1-&gt;4)-beta-D-glucosyl-(1&lt;-&gt;1')-N-acyl-sphing-4-enine + GDP + H(+). The catalysed reaction is beta-D-galactosyl-(1-&gt;3)-N-acetyl-D-glucosamine + GDP-beta-L-fucose = beta-D-galactosyl-(1-&gt;3)-[alpha-L-fucosyl-(1-&gt;4)]-N-acetyl-D-glucosamine + GDP + H(+). It catalyses the reaction alpha-L-Fuc-(1-&gt;2)-beta-D-Gal-(1-&gt;3)-D-GlcNAc + GDP-beta-L-fucose = alpha-L-Fuc-(1-&gt;2)-beta-D-Gal-(1-&gt;3)-[alpha-L-Fuc-(1-&gt;4)]-D-GlcNAc + GDP + H(+). It carries out the reaction alpha-L-Fuc-(1-&gt;2)-beta-D-Gal-(1-&gt;4)-D-GlcNAc + GDP-beta-L-fucose = alpha-L-Fuc-(1-&gt;2)-beta-D-Gal-(1-&gt;4)-[alpha-L-Fuc-(1-&gt;3)]-D-GlcNAc + GDP + H(+). The enzyme catalyses beta-D-galactosyl-(1-&gt;4)-N-acetyl-D-glucosamine + GDP-beta-L-fucose = beta-D-galactosyl-(1-&gt;4)-[alpha-L-fucosyl-(1-&gt;3)]-N-acetyl-D-glucosamine + GDP + H(+). The catalysed reaction is lactose + GDP-beta-L-fucose = beta-D-galactosyl-(1-&gt;4)-[alpha-L-fucosyl-(1-&gt;3)]-D-glucose + GDP + H(+). It catalyses the reaction an alpha-Neu5Ac-(2-&gt;3)-beta-D-Gal-(1-&gt;3)-D-GlcNAc derivative + GDP-beta-L-fucose = an alpha-Neu5Ac-(2-&gt;3)-beta-D-Gal-(1-&gt;3)-[alpha-L-Fuc-(1-&gt;4)]-beta-D-GlcNAc derivative + GDP + H(+). Its pathway is protein modification; protein glycosylation. Functionally, catalyzes the transfer of L-fucose, from a guanosine diphosphate-beta-L-fucose, to both the subterminal N-acetyl glucosamine (GlcNAc) of type 1 chain (beta-D-Gal-(1-&gt;3)-beta-D-GlcNAc) glycolipids and oligosaccharides via an alpha(1,4) linkage, and the subterminal glucose (Glc) or GlcNAc of type 2 chain (beta-D-Gal-(1-&gt;4)-beta-D-GlcNAc) oligosaccharides via an alpha(1,3) linkage, independently of the presence of terminal alpha-L-fucosyl-(1,2) moieties on the terminal galactose of these acceptors and participates in the blood groups Lewis determination and expression of Lewis a (Le(a)), lewis b (Le(b)), Lewis x/SSEA-1 (Le(x)) and lewis y (Le(y)) antigens. Also catalyzes the transfer of L-fucose to subterminal GlcNAc of sialyl- and disialyl-lactotetraosylceramide to produce sialyl Lewis a (sLe(a)) and disialyl Lewis a via an alpha(1,4) linkage and therefore may regulate cell surface sialyl Lewis a expression and consequently regulates adhesive properties to E-selectin, cell proliferation and migration. Catalyzes the transfer of an L-fucose to 3'-sialyl-N-acetyllactosamine by an alpha(1,3) linkage, which allows the formation of sialyl-Lewis x structure and therefore may regulate the sialyl-Lewis x surface antigen expression and consequently adhesive properties to E-selectin. Prefers type 1 chain over type 2 acceptors. Type 1 tetrasaccharide is a better acceptor than type 1 disaccharide suggesting that a beta anomeric configuration of GlcNAc in the substrate is preferred. Lewis-positive (Le(+)) individuals have an active enzyme while Lewis-negative (Le(-)) individuals have an inactive enzyme. The protein is 3-galactosyl-N-acetylglucosaminide 4-alpha-L-fucosyltransferase FUT3 of Pan troglodytes (Chimpanzee).